We begin with the raw amino-acid sequence, 640 residues long: UvrABC system protein C (640 aa).

The region spanning 35–113 (DAPGVYRMIG…IKQLKPRFNV (79 aa)) is the GIY-YIG domain. The UVR domain occupies 223-258 (RAVMATMAKAMEEAAEELEFERAARLRDRIRALSAV).

Belongs to the UvrC family. In terms of assembly, interacts with UvrB in an incision complex.

It localises to the cytoplasm. Its function is as follows. The UvrABC repair system catalyzes the recognition and processing of DNA lesions. UvrC both incises the 5' and 3' sides of the lesion. The N-terminal half is responsible for the 3' incision and the C-terminal half is responsible for the 5' incision. The chain is UvrABC system protein C from Caulobacter vibrioides (strain ATCC 19089 / CIP 103742 / CB 15) (Caulobacter crescentus).